Here is a 435-residue protein sequence, read N- to C-terminus: tRNA(Ile)-lysidine synthase (435 aa).

An ATP-binding site is contributed by 25-30; the sequence is SGGLDS.

It belongs to the tRNA(Ile)-lysidine synthase family.

It is found in the cytoplasm. The catalysed reaction is cytidine(34) in tRNA(Ile2) + L-lysine + ATP = lysidine(34) in tRNA(Ile2) + AMP + diphosphate + H(+). Ligates lysine onto the cytidine present at position 34 of the AUA codon-specific tRNA(Ile) that contains the anticodon CAU, in an ATP-dependent manner. Cytidine is converted to lysidine, thus changing the amino acid specificity of the tRNA from methionine to isoleucine. The chain is tRNA(Ile)-lysidine synthase from Photobacterium profundum (strain SS9).